Consider the following 695-residue polypeptide: Scarecrow-like protein 31 (695 aa).

2 disordered regions span residues valine 105–asparagine 136 and isoleucine 234–glutamine 260. Positions serine 113–asparagine 136 are enriched in low complexity. Residues alanine 233–glutamate 266 adopt a coiled-coil conformation. Residues alanine 306 to valine 693 form the GRAS domain. A leucine repeat I (LRI) region spans residues valine 313–serine 377. Positions tyrosine 396–glycine 461 are VHIID. The VHIID signature appears at leucine 427–aspartate 431. A leucine repeat II (LRII) region spans residues aspartate 477–glutamate 509. Residues leucine 519–asparagine 614 are PFYRE. The segment at alanine 617–valine 693 is SAW.

Belongs to the GRAS family. As to expression, expressed in seedlings, roots, cotyledons, leaves and sepals.

It localises to the nucleus. Probable transcription factor involved in plant development. In Arabidopsis thaliana (Mouse-ear cress), this protein is Scarecrow-like protein 31 (SCL31).